A 218-amino-acid chain; its full sequence is MADVSAKLVKDLRDKTGAGMMDCKKALAESDGDMIKASEWLRKKGIASAEKKSSRIAAEGAIGTYIHTGARVGVLLELNCETDFVARGDLFQGLLKDVAMQVAACPNVEYVSTEEIPVDVVEKEKSIEMGRDDLSGKPEQMKAKIVEGRIGKRLKELVLLEQPFIRDSSMTVAELVKQVAGKIGENVQVRRFTRYTLGEGIEVDQTDFATEVASMKTA.

Residues 82–85 (TDFV) form an involved in Mg(2+) ion dislocation from EF-Tu region.

Belongs to the EF-Ts family.

It is found in the cytoplasm. Associates with the EF-Tu.GDP complex and induces the exchange of GDP to GTP. It remains bound to the aminoacyl-tRNA.EF-Tu.GTP complex up to the GTP hydrolysis stage on the ribosome. In Prochlorococcus marinus (strain MIT 9303), this protein is Elongation factor Ts.